The following is a 338-amino-acid chain: Anthranilate phosphoribosyltransferase (338 aa).

5-phospho-alpha-D-ribose 1-diphosphate contacts are provided by residues G81, 84 to 85 (GD), S89, 91 to 94 (NIST), 109 to 117 (KHGNRSVSS), and S121. G81 is an anthranilate binding site. S93 serves as a coordination point for Mg(2+). N112 contacts anthranilate. Residue R167 participates in anthranilate binding. D226 and E227 together coordinate Mg(2+).

This sequence belongs to the anthranilate phosphoribosyltransferase family. Homodimer. Requires Mg(2+) as cofactor.

The catalysed reaction is N-(5-phospho-beta-D-ribosyl)anthranilate + diphosphate = 5-phospho-alpha-D-ribose 1-diphosphate + anthranilate. The protein operates within amino-acid biosynthesis; L-tryptophan biosynthesis; L-tryptophan from chorismate: step 2/5. In terms of biological role, catalyzes the transfer of the phosphoribosyl group of 5-phosphorylribose-1-pyrophosphate (PRPP) to anthranilate to yield N-(5'-phosphoribosyl)-anthranilate (PRA). The polypeptide is Anthranilate phosphoribosyltransferase (Thioalkalivibrio sulfidiphilus (strain HL-EbGR7)).